The sequence spans 118 residues: UPF0102 protein Arth_2474 (118 aa).

It belongs to the UPF0102 family.

The polypeptide is UPF0102 protein Arth_2474 (Arthrobacter sp. (strain FB24)).